A 429-amino-acid polypeptide reads, in one-letter code: Putative GMP synthase [glutamine-hydrolyzing] (429 aa).

The 109-residue stretch at 10–118 folds into the Glutamine amidotransferase type-1 domain; the sequence is TIFILDFGSQ…GYTPIHLYPC (109 aa). Residue C87 is the Nucleophile of the active site. Positions 119-304 constitute a GMPS ATP-PPase domain; the sequence is ELFKHIVDCE…LGLSSYLLDR (186 aa). Catalysis depends on residues H176 and E178.

In terms of assembly, homodimer.

It catalyses the reaction XMP + L-glutamine + ATP + H2O = GMP + L-glutamate + AMP + diphosphate + 2 H(+). The protein operates within purine metabolism; GMP biosynthesis; GMP from XMP (L-Gln route): step 1/1. Its function is as follows. Catalyzes the synthesis of GMP from XMP. This Chlamydia pneumoniae (Chlamydophila pneumoniae) protein is Putative GMP synthase [glutamine-hydrolyzing] (guaA).